Reading from the N-terminus, the 217-residue chain is Ribonuclease HII (217 aa).

The region spanning 17-207 is the RNase H type-2 domain; that stretch reads KVIYGVDEAG…CVGQSVSGAR (191 aa). Positions 23, 24, and 116 each coordinate a divalent metal cation.

The protein belongs to the RNase HII family. Mn(2+) is required as a cofactor. The cofactor is Mg(2+).

The protein localises to the cytoplasm. The catalysed reaction is Endonucleolytic cleavage to 5'-phosphomonoester.. Functionally, endonuclease that specifically degrades the RNA of RNA-DNA hybrids. In Nitrosomonas europaea (strain ATCC 19718 / CIP 103999 / KCTC 2705 / NBRC 14298), this protein is Ribonuclease HII.